Consider the following 340-residue polypeptide: Speriolin-like protein (340 aa).

2 disordered regions span residues 42–73 (GGGHDLLPPRAHAYPEAGSPGSGVPDFGRFTS) and 94–135 (APLS…KLSP). Position 60 is a phosphoserine (serine 60). Basic and acidic residues predominate over residues 123–133 (PHSHRGTDRKL). Serine 134 is subject to Phosphoserine.

It belongs to the speriolin family.

The protein localises to the cytoplasm. The protein is Speriolin-like protein (SPATC1L) of Homo sapiens (Human).